The primary structure comprises 355 residues: Guanine nucleotide-binding protein alpha-12 subunit (355 aa).

The region spanning 28-355 (RQINLLLLGS…EQNLKTLMMQ (328 aa)) is the G-alpha domain. Positions 31-44 (NLLLLGSGESGKST) are G1 motif. Residues 36–43 (GSGESGKS), 176–182 (LFCRKAT), 201–205 (DVGGQ), 270–273 (NKND), and Ala-327 contribute to the GTP site. Mg(2+) contacts are provided by Ser-43 and Thr-182. The interval 174 to 182 (DILFCRKAT) is G2 motif. Residues 197 to 206 (FRFIDVGGQR) are G3 motif. The interval 266–273 (ILFMNKND) is G4 motif. A G5 motif region spans residues 325-330 (TTAVDT).

Belongs to the G-alpha family. In terms of assembly, g proteins are composed of 3 units; alpha, beta and gamma. The alpha chain contains the guanine nucleotide binding site.

Its function is as follows. Guanine nucleotide-binding proteins (G proteins) are involved as modulators or transducers in various transmembrane signaling systems. May play a role in resistance to fungal infection in the epidermis by regulating the up-regulation of several antimicrobial peptides of the NLP and CNC families. Upstream of plc-3, egl-8, tpa-1 and the p38-like pathway, required for the expression of antimicrobial peptide nlp-29 in the epidermis in response to fungal infection or physical injury. The sequence is that of Guanine nucleotide-binding protein alpha-12 subunit (gpa-12) from Caenorhabditis briggsae.